Here is a 129-residue protein sequence, read N- to C-terminus: UPF0325 protein ESA_03178 (129 aa).

This sequence belongs to the UPF0325 family.

In Cronobacter sakazakii (strain ATCC BAA-894) (Enterobacter sakazakii), this protein is UPF0325 protein ESA_03178.